Here is a 110-residue protein sequence, read N- to C-terminus: Bowman-Birk type proteinase inhibitor (110 aa).

The N-terminal stretch at 1-28 (MVLMNKKAIMKLALMLFLLGFTANVVDA) is a signal peptide. Positions 29–42 (RFDSTSFITQVLSN) are excised as a propeptide. 7 cysteine pairs are disulfide-bonded: cysteine 50/cysteine 103, cysteine 51/cysteine 66, cysteine 54/cysteine 99, cysteine 56/cysteine 64, cysteine 73/cysteine 80, cysteine 77/cysteine 92, and cysteine 82/cysteine 90.

As to quaternary structure, monomer.

Its function is as follows. Inhibitor of trypsin and of chymotrypsin. The polypeptide is Bowman-Birk type proteinase inhibitor (Lens culinaris (Lentil)).